The chain runs to 281 residues: Diaminopimelate epimerase (281 aa).

Positions 13 and 66 each coordinate substrate. Residue cysteine 75 is the Proton donor of the active site. Residues glycine 76–asparagine 77, asparagine 164, asparagine 197, and glutamate 215–arginine 216 contribute to the substrate site. The active-site Proton acceptor is the cysteine 224. Substrate is bound at residue glycine 225–threonine 226.

The protein belongs to the diaminopimelate epimerase family. As to quaternary structure, homodimer.

The protein localises to the cytoplasm. The enzyme catalyses (2S,6S)-2,6-diaminopimelate = meso-2,6-diaminopimelate. It functions in the pathway amino-acid biosynthesis; L-lysine biosynthesis via DAP pathway; DL-2,6-diaminopimelate from LL-2,6-diaminopimelate: step 1/1. Its function is as follows. Catalyzes the stereoinversion of LL-2,6-diaminopimelate (L,L-DAP) to meso-diaminopimelate (meso-DAP), a precursor of L-lysine and an essential component of the bacterial peptidoglycan. The sequence is that of Diaminopimelate epimerase from Rippkaea orientalis (strain PCC 8801 / RF-1) (Cyanothece sp. (strain PCC 8801)).